The primary structure comprises 697 residues: Glycine--tRNA ligase beta subunit (697 aa).

Belongs to the class-II aminoacyl-tRNA synthetase family. Tetramer of two alpha and two beta subunits.

The protein resides in the cytoplasm. It carries out the reaction tRNA(Gly) + glycine + ATP = glycyl-tRNA(Gly) + AMP + diphosphate. This Solidesulfovibrio magneticus (strain ATCC 700980 / DSM 13731 / RS-1) (Desulfovibrio magneticus) protein is Glycine--tRNA ligase beta subunit.